Reading from the N-terminus, the 360-residue chain is MHLTRLNIERVRNLKTVALHGLQPFNVFYGANGSGKTSILEAIHLLATGRSFRTHIPKNYIQYEADDAIVFAQSATEKIGMQKLASGEQLMKVNGDTVATQGQLAKLLPLQHIDPQSTDIIDHGAKPRRQLLDWLMFHVEPEFYFAWQYYSRALKQRNTLLKTRRNLSLADLEPWNKMLSDYGEILHSQRLSIVEQWNVYFQNDLSQLLPDLEIELEYSPGFHTEQGLMQDLLNQHQKDIERRYTEYGPHRADLRLKTPFGHADDVLSRGQKKLLIIALKLSQIAMLHASNKETVVLLDDLTAELDLTAQQRLIERLSQLGSQVFMTTLDHASVKKHLHDLSISYQLFSVESGQVSLAAP.

An ATP-binding site is contributed by 30–37 (GANGSGKT).

This sequence belongs to the RecF family.

It is found in the cytoplasm. Functionally, the RecF protein is involved in DNA metabolism; it is required for DNA replication and normal SOS inducibility. RecF binds preferentially to single-stranded, linear DNA. It also seems to bind ATP. This chain is DNA replication and repair protein RecF, found in Acinetobacter baumannii (strain AB307-0294).